We begin with the raw amino-acid sequence, 145 residues long: Large ribosomal subunit protein uL15 (145 aa).

Positions 1–58 (MKLHELSPSEGSRKKRKRVGRGPGSGMGGTSTRGNKGHNQRSGGGTRPGFEGGQMPLH) are disordered. 2 stretches are compositionally biased toward gly residues: residues 21–31 (RGPGSGMGGTS) and 42–52 (SGGGTRPGFEG).

This sequence belongs to the universal ribosomal protein uL15 family. Part of the 50S ribosomal subunit.

Functionally, binds to the 23S rRNA. This is Large ribosomal subunit protein uL15 from Desulforapulum autotrophicum (strain ATCC 43914 / DSM 3382 / VKM B-1955 / HRM2) (Desulfobacterium autotrophicum).